The chain runs to 402 residues: Homoserine O-acetyltransferase (402 aa).

Positions 1–17 are enriched in polar residues; that stretch reads MDWQTTSADTAPSSFIT. A disordered region spans residues 1–39; that stretch reads MDWQTTSADTAPSSFITEEQDRSLFGKPPASGAWKESDP. In terms of domain architecture, AB hydrolase-1 spans 78–388; the sequence is NAVLVLHALT…HFGHDGFLIE (311 aa). S183 functions as the Nucleophile in the catalytic mechanism. R255 serves as a coordination point for substrate. Catalysis depends on residues D349 and H382. D383 contacts substrate.

It belongs to the AB hydrolase superfamily. MetX family. As to quaternary structure, homodimer.

It is found in the cytoplasm. The enzyme catalyses L-homoserine + acetyl-CoA = O-acetyl-L-homoserine + CoA. Its pathway is amino-acid biosynthesis; L-methionine biosynthesis via de novo pathway; O-acetyl-L-homoserine from L-homoserine: step 1/1. Transfers an acetyl group from acetyl-CoA to L-homoserine, forming acetyl-L-homoserine. This Leifsonia xyli subsp. xyli (strain CTCB07) protein is Homoserine O-acetyltransferase.